Reading from the N-terminus, the 1275-residue chain is Histone-lysine N-methyltransferase PRDM16 (1275 aa).

The span at Met-1–Leu-10 shows a compositional bias: basic residues. A disordered region spans residues Met-1–Ser-66. One can recognise an SET domain in the interval Pro-82 to Lys-211. The C2H2-type 1; degenerate zinc-finger motif lies at Phe-230 to Ser-255. 5 consecutive C2H2-type zinc fingers follow at residues His-282–His-304, Tyr-310–His-332, Phe-338–His-361, His-367–His-389, and Phe-395–His-417. A C2H2-type 7; atypical zinc finger spans residues Ile-424–Cys-446. 2 disordered regions span residues Val-592 to Gly-658 and Ala-789 to Glu-838. Low complexity predominate over residues Thr-610–Asp-625. Basic and acidic residues-rich tracts occupy residues Asp-631–Pro-648 and Arg-821–Gly-835. The interaction with CTBP1, CTBP2 and ZNF516 stretch occupies residues Glu-680–Ser-1038. Residues Pro-740 to Leu-1275 form a mediates interaction with SKI and regulation of TGF-beta signaling region. C2H2-type zinc fingers lie at residues Tyr-951–His-973, Tyr-979–His-1002, and Phe-1008–His-1030. Disordered stretches follow at residues Leu-1027 to Leu-1065 and Glu-1084 to Asp-1169. The segment covering Ser-1038 to Glu-1058 has biased composition (polar residues). Residues Asp-1117 to Ser-1133 are compositionally biased toward acidic residues.

Belongs to the PRDM16 family. In terms of assembly, interacts with CEBPA, CEBPB and CEBPD; the interaction is direct. Interacts with PPARG and PPARA; controls brown adipocytes. Interacts with CTBP1 and CTBP2; represses the expression of WAT-specific genes. Interacts with PPARGC1A and PPARGC1B; interaction with PPARGC1A or PPARGC1B activates the transcription of BAT-specific gene. Interacts with HDAC1, SKI and SMAD2; the interaction with SKI promotes the recruitment of SMAD3-HDAC1 complex on the promoter of TGF-beta target genes. Interacts with ZNF516; the interaction is direct and may play a role in the transcription of brown adipose tissue-specific gene. Enriched in BAT compared to WAT. Detected in heart, lung, kidney and brain. Expressed in nuclei of cardiomyocytes.

Its subcellular location is the nucleus. It is found in the cytoplasm. The enzyme catalyses L-lysyl(9)-[histone H3] + S-adenosyl-L-methionine = N(6)-methyl-L-lysyl(9)-[histone H3] + S-adenosyl-L-homocysteine + H(+). In terms of biological role, binds DNA and functions as a transcriptional regulator. Displays histone methyltransferase activity and monomethylates 'Lys-9' of histone H3 (H3K9me1) in vitro. Probably catalyzes the monomethylation of free histone H3 in the cytoplasm which is then transported to the nucleus and incorporated into nucleosomes where SUV39H methyltransferases use it as a substrate to catalyze histone H3 'Lys-9' trimethylation. Likely to be one of the primary histone methyltransferases along with MECOM/PRDM3 that direct cytoplasmic H3K9me1 methylation. Functions in the differentiation of brown adipose tissue (BAT) which is specialized in dissipating chemical energy in the form of heat in response to cold or excess feeding while white adipose tissue (WAT) is specialized in the storage of excess energy and the control of systemic metabolism. Together with CEBPB, regulates the differentiation of myoblastic precursors into brown adipose cells. Functions as a repressor of TGF-beta signaling. The chain is Histone-lysine N-methyltransferase PRDM16 from Mus musculus (Mouse).